A 5085-amino-acid chain; its full sequence is Protein piccolo (5085 aa).

Residues 1–20 (MGNEASLEGEGLPEGLAAAA) show a composition bias toward low complexity. 2 disordered regions span residues 1–142 (MGNE…DFKE) and 173–516 (DLIS…TPAQ). Residues 92 to 101 (PGKPPDPGRP) are compositionally biased toward pro residues. Basic and acidic residues-rich tracts occupy residues 110–121 (RTTDTFRSEQKL), 132–142 (KESKSRTDFKE), and 184–198 (ETTK…EQGK). Residues S211 and S231 each carry the phosphoserine modification. Residues 227–240 (QQDSSPKSVSSQQA) are compositionally biased toward polar residues. The span at 253 to 268 (PSQQSPAQTPAQQASP) shows a compositional bias: low complexity. Composition is skewed to polar residues over residues 275 to 285 (QPGSAKATVQQ), 318 to 332 (KTSS…SLAQ), and 375 to 391 (TPAQ…QQPG). The tract at residues 372–491 (PTKTPAQQSG…LAKPSAQQPT (120 aa)) is 12 X 10 AA tandem approximate repeats of P-A-K-P-Q-P-Q-Q-P-X. A compositionally biased stretch (pro residues) spans 392–408 (PTKPSPQQPIPAKPQPQ). Low complexity predominate over residues 409-423 (QPVATKTQPQQSAPA). Residues 424-472 (KPQPQQPAPAKPQPQQPTPAKPQPQPPTPAKPQPQPPTATKPQPQPPTA) show a composition bias toward pro residues. Polar residues predominate over residues 486-499 (SAQQPTKSISQTVT). Residues 523–547 (CPLCNTTELLLHIPEKANFNTCTEC) form a C4-type zinc finger. 5 disordered regions span residues 586-880 (AAIP…TVTG), 896-1012 (LIST…ACPL), 1069-1357 (QLGD…PSDL), 1373-1604 (STLV…EELV), and 1622-1815 (TIAD…SDPE). Over residues 596-613 (PKAATAPTATASKSPVPS) the composition is skewed to low complexity. The segment covering 618–654 (PKKEPPSKQDSPKALESKKPPEPKKPPEPKKPPEPKK) has biased composition (basic and acidic residues). A compositionally biased stretch (low complexity) spans 672 to 682 (APQLPVAEALP). The span at 683–693 (EPAPPKEPSGP) shows a compositional bias: pro residues. The segment covering 705 to 717 (VEPKQPKMTETRA) has biased composition (basic and acidic residues). A compositionally biased stretch (polar residues) spans 718–767 (DIQSSSTTKPDILSSQVQSQAQVKTASPLKTDSAKPSQSFPPTGEKTTPL). The segment covering 790–808 (ESKDPKHIDPIQKKDEPKK) has biased composition (basic and acidic residues). A phosphoserine mark is found at S857 and S869. Polar residues-rich tracts occupy residues 867 to 878 (PKSQPTTPQETV), 896 to 906 (LISTAGQQGPH), and 917 to 936 (QAPT…STGQ). T873 bears the Phosphothreonine mark. The span at 990 to 1004 (EPEKAVPAHKPDKTT) shows a compositional bias: basic and acidic residues. The segment at 1010–1033 (CPLCRTELNLGSQEPPNFNTCTEC) adopts a C4-type zinc-finger fold. The segment covering 1077 to 1092 (PPAPSGPKASPMPAPA) has biased composition (pro residues). A compositionally biased stretch (basic and acidic residues) spans 1110–1129 (KEAEGKTEAEKPVPEKETAS). T1133 carries the phosphothreonine modification. 3 stretches are compositionally biased toward basic and acidic residues: residues 1141–1150 (QKLEESEGKK), 1157–1199 (PEKK…KLPP), and 1274–1295 (SSKD…DKSD). Over residues 1300-1318 (QQPKSPQGLSDTGYSSDGI) the composition is skewed to polar residues. S1304, S1314, S1315, S1344, S1346, S1349, S1350, and S1353 each carry phosphoserine. Residues 1331–1345 (SDEKDLLKGLKKDSF) show a composition bias toward basic and acidic residues. Residues 1346 to 1355 (SQESSPSSPS) are compositionally biased toward low complexity. The segment covering 1378–1396 (EKAEKKTQPQKISPEKPQD) has biased composition (basic and acidic residues). Polar residues predominate over residues 1397–1407 (QQKTQTASETL). The segment covering 1417 to 1456 (KESQEKKVSPKKDSEQGFPSRKEHKEKPELVDDLSPRRAS) has biased composition (basic and acidic residues). Phosphoserine is present on residues S1451, S1463, S1464, S1466, S1469, S1493, S1496, S1517, and S1519. The segment covering 1511-1523 (SADEDASGSEDEE) has biased composition (acidic residues). Position 1564 is a phosphothreonine (T1564). 3 positions are modified to phosphoserine: S1565, S1575, and S1587. Residues 1578–1587 (DEDDETFDES) are compositionally biased toward acidic residues. The segment covering 1588 to 1599 (PELKFRETKSQE) has biased composition (basic and acidic residues). A compositionally biased stretch (polar residues) spans 1622–1635 (TIADKYSSESSQKK). The span at 1640–1650 (FDEEPELEMES) shows a compositional bias: acidic residues. Phosphoserine is present on S1650. T1652 carries the phosphothreonine modification. Residues S1654 and S1659 each carry the phosphoserine modification. Residues 1662-1679 (EGSSSLHASSFTPGTSPT) are compositionally biased toward polar residues. A compositionally biased stretch (acidic residues) spans 1719-1732 (DSSEEEELREEEEL). Residues S1720 and S1721 each carry the phosphoserine modification. Over residues 1733-1746 (LKEQEKQRELEQQQ) the composition is skewed to basic and acidic residues. T1772 carries the phosphothreonine modification. S1778 carries the phosphoserine modification. Basic and acidic residues predominate over residues 1787 to 1802 (EELRQAAEMEELHRSS). 4 positions are modified to phosphoserine: S1807, S1812, S1820, and S1841. Disordered stretches follow at residues 2116–2139 (PSES…SSVC), 2275–2385 (ELTK…PTYP), and 2456–2486 (KPPI…TGLS). Residues 2121–2139 (TSVPPSDTPSLTSSISSVC) show a composition bias toward low complexity. Positions 2350-2384 (QPPPPPPPPPPSPSTSSPPPTPPLPPATSPKPPTY) are enriched in pro residues. Position 2511 is a phosphoserine (S2511). Residue T2702 is glycosylated (O-linked (GlcNAc) threonine). O-linked (GlcNAc) serine glycosylation occurs at S2976. T3014 carries the post-translational modification Phosphothreonine. 2 disordered regions span residues 3350-3457 (KEEK…PLSK) and 3503-3572 (KTYK…LYSP). The residue at position 3374 (S3374) is a Phosphoserine. Residues 3377 to 3386 (DDPRNLKKIV) are compositionally biased toward basic and acidic residues. S3388 is subject to Phosphoserine. Residues T3392 and T3419 each carry the phosphothreonine modification. Positions 3419–3428 (TDDEDQDEWD) are enriched in acidic residues. A compositionally biased stretch (polar residues) spans 3511 to 3523 (GCQTETDSDTQSP). Phosphoserine is present on residues S3522, S3530, S3561, S3565, S3571, S3574, S3577, S3598, S3624, S3626, and S3632. Disordered stretches follow at residues 3602–3695 (VLHP…ASRR) and 3774–3816 (AEDR…FIPP). Polar residues-rich tracts occupy residues 3647–3663 (EGFT…SGTQ) and 3679–3691 (STGT…TMGT). S3781 carries the phosphoserine modification. Residues 3791-3803 (SRVESQHGVERPR) are compositionally biased toward basic and acidic residues. The span at 3805–3816 (APQTEFSQFIPP) shows a compositional bias: polar residues. Residues S4034 and S4150 each carry the phosphoserine modification. 2 disordered regions span residues 4225–4248 (ADKP…YGLD) and 4272–4291 (VSFG…LPIS). A compositionally biased stretch (low complexity) spans 4228–4248 (PYSSGSRSRPSSRPSSVYGLD). The span at 4275–4291 (GHSSSSARTKPTSLPIS) shows a compositional bias: polar residues. S4304, S4308, S4311, S4340, and S4376 each carry phosphoserine. Positions 4335–4357 (RDQFGSSHSLPEVQQHMREESRT) are disordered. One can recognise a PDZ domain in the interval 4442-4536 (RVKITRDFKD…EAEICVRLDL (95 aa)). The tract at residues 4589–4638 (VEKGSHAHSGPTSAGSSSVPSPGQPGSPSVSKKKHSSTKPTDGPKAASHP) is disordered. The span at 4595–4618 (AHSGPTSAGSSSVPSPGQPGSPSV) shows a compositional bias: low complexity. At S4609 the chain carries Phosphoserine. A C2 1 domain is found at 4639-4768 (ITGEIQLQIN…SHLDNTPRWY (130 aa)). Positions 4668 and 4674 each coordinate Ca(2+). Position 4723 is a phosphoserine (S4723). Ca(2+) contacts are provided by D4738, D4740, S4743, and D4746. Disordered regions lie at residues 4775–4851 (ESID…SVAQ) and 4874–4908 (QPTK…SEGS). 2 stretches are compositionally biased toward low complexity: residues 4783–4795 (HSSQ…PKPS) and 4822–4832 (SSPGSSKSSSE). A compositionally biased stretch (polar residues) spans 4840–4851 (PSRSQSKTSVAQ). The segment covering 4886 to 4908 (SSVSTGSSGSSVGSGYSVDSEGS) has biased composition (low complexity). Residues 4950–5075 (VMGEIKLALK…DLRKRIVNWH (126 aa)) enclose the C2 2 domain.

In terms of assembly, interacts with BSN, ERC2/CAST1, RIMS1 and UNC13A. Interacts (via C-terminus) with TRIO (via N-terminus). Interacts with CTBP1. Interacts with SIAH1; this interaction negatively regulates SIAH1 E3 ligase activity. Directly interacts with GIT1 and GIT2. The cofactor is Ca(2+). In terms of tissue distribution, expressed in brain (at protein level).

Its subcellular location is the presynaptic active zone. Functionally, scaffold protein of the presynaptic cytomatrix at the active zone (CAZ) which is the place in the synapse where neurotransmitter is released. After synthesis, participates in the formation of Golgi-derived membranous organelles termed Piccolo-Bassoon transport vesicles (PTVs) that are transported along axons to sites of nascent synaptic contacts. At the presynaptic active zone, regulates the spatial organization of synaptic vesicle cluster, the protein complexes that execute membrane fusion and compensatory endocytosis. Organizes as well the readily releasable pool of synaptic vesicles and safeguards a fraction of them to be not immediately available for action potential-induced release. Also functions in processes other than assembly such as the regulation of specific presynaptic protein ubiquitination by interacting with SIAH1 or the regulation of presynaptic autophagy. Also mediates synapse to nucleus communication leading to reconfiguration of gene expression by associating with the transcriptional corepressor CTBP1 and by subsequently reducing the size of its pool available for nuclear import. The sequence is that of Protein piccolo (Pclo) from Rattus norvegicus (Rat).